The primary structure comprises 417 residues: MSGRSRGRKSSRAKNRGKGRAKARVRPAPDDAPRDPDPSQYQSLGEDTQAAQVQAGAGWGGLEAAASAQLLRLGEEAACRLPLDCGLALRARAAGDHGQAAARPGPGKAASLSERLAADTVFVGTAGTVGRPKNAPRVGNRRGPAGKKAPETCSTAGRGPQVIAGGRQKKGAAGENTSVSAGEEKKEERDAGSGPPATEGSMDTLENVQLKLENMNAQADRAYLRLSRKFGQLRLQHLERRNHLIQNIPGFWGQAFQNHPQLASFLNSQEKEVLSYLNSLEVEELGLARLGYKIKFYFDRNPYFQNKVLIKEYGCGPSGQVVSRSTPIQWLPGHDLQSLSQGNPENNRSFFGWFSNHSSIESDKIVEIINEELWPNPLQFYLLSEGARVEKGKEKEGRQGPGKQPMETTQPGVSQSN.

A compositionally biased stretch (basic residues) spans 1–25 (MSGRSRGRKSSRAKNRGKGRAKARV). Disordered stretches follow at residues 1–55 (MSGR…QVQA), 93–112 (AAGD…AASL), 127–202 (GTVG…EGSM), and 391–417 (KGKE…SQSN). Residues 27–37 (PAPDDAPRDPD) show a composition bias toward basic and acidic residues. Over residues 93-103 (AAGDHGQAAAR) the composition is skewed to low complexity. The segment covering 182 to 191 (GEEKKEERDA) has biased composition (basic and acidic residues). Polar residues predominate over residues 406-417 (METTQPGVSQSN).

The protein belongs to the nucleosome assembly protein (NAP) family. Interacts with USP7.

Involved in modulation of cell growth and cellular response to gamma radiation probably via regulation of the Akt signaling pathway. Involved in regulation of p53/TP53. Suppresses p53/TP53 protein levels and promotes its ubiquitination; the function is dependent on USP7 and independent on MDM2. Proposed to displace p53/TP53 from interaction with USP7. This Homo sapiens (Human) protein is Testis-specific Y-encoded-like protein 5 (TSPYL5).